The primary structure comprises 293 residues: tRNA(His) guanylyltransferase (293 aa).

Mg(2+)-binding residues include Asp-29, Gly-30, and Asp-76. Residues 29-34 (DGRGFT) and 75-76 (SD) contribute to the GTP site. A disordered region spans residues 226–252 (KKVSEEEAEEMSSSAVPEVKSKSQVEK).

This sequence belongs to the tRNA(His) guanylyltransferase family. Mg(2+) is required as a cofactor.

It carries out the reaction a 5'-end ribonucleotide-tRNA(His) + GTP + ATP + H2O = a 5'-end phospho-guanosine-ribonucleotide-tRNA(His) + AMP + 2 diphosphate + H(+). Its function is as follows. Adds a GMP to the 5'-end of tRNA(His) after transcription and RNase P cleavage. The chain is tRNA(His) guanylyltransferase (rgt-1) from Neurospora crassa (strain ATCC 24698 / 74-OR23-1A / CBS 708.71 / DSM 1257 / FGSC 987).